A 399-amino-acid polypeptide reads, in one-letter code: MKKLAILGATGSIGDSTLSVCRSNPELYQITLLAASSSVDKMLALCREFTPLYVSMSSEISAKKLRGLLKRNNLSCHVLDDEQRLLELLASDHVDSVMAAIVGAAGLKTTLAAVDAGKEVFLANKEALVMSGALFIDAVKKSGAKLWPVDSEHNAIYQALSPKLQNTIGACDLSGEGVSKILLTGSGGPFLEKPLAEFAAITPAQAVKHPNWSMGKKISIDSATMMNKGLEYIEARWLFNANKEQLQIIIHPQSVIHSMVQYKDGSVIAQMGNPNMRIPIAYVLGGEQRIESGTDFLDFFAAPDFSFTAPDFDRYPCLKLAIDACFEGQQSTTILNAANEIAVEAFLNQTIKFTQISQLVERVLNQHESAAIESVEHLLEIDTEARLSASEIIKRDYLC.

Residues Thr10, Gly11, Ser12, Ile13, and Asn124 each contribute to the NADPH site. Lys125 contributes to the 1-deoxy-D-xylulose 5-phosphate binding site. Glu126 serves as a coordination point for NADPH. Asp150 provides a ligand contact to Mn(2+). Positions 151, 152, 186, and 209 each coordinate 1-deoxy-D-xylulose 5-phosphate. Glu152 serves as a coordination point for Mn(2+). Gly215 lines the NADPH pocket. 1-deoxy-D-xylulose 5-phosphate contacts are provided by Ser222, Asn227, Lys228, and Glu231. Glu231 contributes to the Mn(2+) binding site.

Belongs to the DXR family. Mg(2+) is required as a cofactor. The cofactor is Mn(2+).

The enzyme catalyses 2-C-methyl-D-erythritol 4-phosphate + NADP(+) = 1-deoxy-D-xylulose 5-phosphate + NADPH + H(+). It participates in isoprenoid biosynthesis; isopentenyl diphosphate biosynthesis via DXP pathway; isopentenyl diphosphate from 1-deoxy-D-xylulose 5-phosphate: step 1/6. Catalyzes the NADPH-dependent rearrangement and reduction of 1-deoxy-D-xylulose-5-phosphate (DXP) to 2-C-methyl-D-erythritol 4-phosphate (MEP). The protein is 1-deoxy-D-xylulose 5-phosphate reductoisomerase of Psychromonas ingrahamii (strain DSM 17664 / CCUG 51855 / 37).